We begin with the raw amino-acid sequence, 473 residues long: MSNIYIQEPPTNGKVLLKTTAGDIDIELWSKEAPKACRNFIQLCLEAYYDNTIFHRVVPGFIVQGGDPTGTGSGGESIYGAPFKDEFHSRLRFNRRGLVAMANAGSHDNGSQFFFTLGRADELNNKHTIFGKVTGDTVYNMLRLSEVDIDDEERPHNPHKIKSCEVLFNPFDDIIPREIKRPKKEKPEEEVKKLKPKGTKNFSLLSFGEEAEEEEEEVNRVSQSMKGKSKSSHDLLKDDPHLSSVPVVESEKGDAAGDLDDGGEGESAEHDEYIDGDEKNLMRERIAKKLKKDTSANVKSTGEGEVEKKSVNRSEELRKEARQLKRELLAAKQKKVENAAKPAEKRSEEEEATPDGAVAEYRREKQKYEALRKQQSKKGTSREDQTLALLNQFKSKLTQAIAETPENDIPETEVEDDEGWMSHVLQFEDKSRKVKDASMQDSDTFEIYDPRNPVNKRRREESKKLMREKKERR.

Ser2 carries the N-acetylserine modification. The PPIase cyclophilin-type domain occupies 11–166; the sequence is TNGKVLLKTT…NPHKIKSCEV (156 aa). Residues 177–193 are compositionally biased toward basic and acidic residues; sequence REIKRPKKEKPEEEVKK. Disordered regions lie at residues 177 to 386 and 399 to 473; these read REIK…EDQT and QAIA…KERR. A coiled-coil region spans residues 206–230; sequence SFGEEAEEEEEEVNRVSQSMKGKSK. Basic and acidic residues predominate over residues 231–241; it reads SSHDLLKDDPH. The span at 257 to 266 shows a compositional bias: acidic residues; that stretch reads GDLDDGGEGE. 3 stretches are compositionally biased toward basic and acidic residues: residues 267 to 287, 305 to 348, and 360 to 372; these read SAEH…ERIA, EVEK…KRSE, and EYRR…EALR. Residues 305 to 378 adopt a coiled-coil conformation; that stretch reads EVEKKSVNRS…EALRKQQSKK (74 aa). Residue Ser347 is modified to Phosphoserine. Acidic residues predominate over residues 405–419; that stretch reads PENDIPETEVEDDEG. Composition is skewed to basic and acidic residues over residues 426–438 and 458–473; these read QFED…KDAS and RREE…KERR.

Belongs to the cyclophilin-type PPIase family. As to quaternary structure, part of the activated spliceosome B/catalytic step 1 spliceosome, one of the forms of the spliceosome which has a well-formed active site but still cannot catalyze the branching reaction and is composed at least of 52 proteins, the U2, U5 and U6 snRNAs and the pre-mRNA. Recruited during early steps of activated spliceosome B maturation, it is probably one of the first proteins released from this complex as he matures to the spliceosome C complex. Component of the minor spliceosome, which splices U12-type introns.

The protein resides in the nucleus. In terms of biological role, as part of the spliceosome, plays a role in pre-mRNA splicing. Probable inactive PPIase with no peptidyl-prolyl cis-trans isomerase activity. As a component of the minor spliceosome, involved in the splicing of U12-type introns in pre-mRNAs. This chain is Spliceosome-associated protein CWC27 homolog, found in Pongo abelii (Sumatran orangutan).